A 670-amino-acid chain; its full sequence is MAGQFCLPVSPRLSPLKPLKPHFGDIQVGIYVAIQRSDKRMHLAVVTEINRENSWVTVEWVEKAVKKGKKIDLETILLLNPSLDSAEDPMPVSPLAPAPSSAIGDQSTTTKRVVMIPQKNKTASGDSLDVRVPSKPCLMKQKKSPCLQEIEKVQKQREKRRRLQQEIRARRALDVNTRNPNYEIMHMIEEYRRHLDSSKISVLEPRQEHRICVCVRKRPLNQRETTLKDLDIITVPSDNVVMVHESKQKVDLTRYLENQTFCFDHAFDDKASNELVYQFTAQPLVESIFRKGMATCFAYGQTGSGKTYTMGGDFAGRAQDHSKGIYALVAQDVFLLLRNSIYEKLDLKVYGTFFEIYGGKVYDLLNWKKKLQVLEDGNQQIQVVGLQEQEVCCVEEVLNLVELGNSCRTSRQTSVNAHSSRSHAVFQIILKSGGKLHGKFSLVDLAGNERGADTTKASRKRQLEGAEINKSLLALKECILALGQNKPHTPFRASKLTQVLRDSFIGRNSSTCMIATISPGMTSCENTLNTLRYANRVKELNADGRPYHRGLYPNGHEASRMLKSHIGNSEMSLQRDEFIKIPCVQSEEQQKEIEDVERATLLGKDTTTSRKGSSQWLENIQERTGGVNHDVDFCIAQSLSILEQKIGVLTEIQKKLKLLRADLHVKSKVE.

Thr-122 carries the phosphothreonine; by PLK1 modification. Positions 146 to 173 (CLQEIEKVQKQREKRRRLQQEIRARRAL) form a coiled coil. Ser-201 carries the post-translational modification Phosphoserine; by PLK1. The Kinesin motor domain maps to 210–540 (RICVCVRKRP…LRYANRVKEL (331 aa)). 300 to 307 (GQTGSGKT) is an ATP binding site.

This sequence belongs to the TRAFAC class myosin-kinesin ATPase superfamily. Kinesin family. MCAK/KIF2 subfamily. In terms of processing, phosphorylation at Thr-122 by PLK1 is required for activity in the correction of kinetochore-microtubules attachment errors, while phosphorylation at Ser-201 also by PLK1 is required for the kinetochore localization and activity in prometaphase.

The protein localises to the cytoplasm. Its subcellular location is the cytoskeleton. The protein resides in the microtubule organizing center. It localises to the centrosome. It is found in the spindle. The protein localises to the chromosome. Its subcellular location is the centromere. The protein resides in the kinetochore. Plus end-directed microtubule-dependent motor required for spindle assembly and chromosome movement during mitosis. Has microtubule depolymerization activity. Plays a role in chromosome congression. This Macaca fascicularis (Crab-eating macaque) protein is Kinesin-like protein KIF2B (KIF2B).